Consider the following 361-residue polypeptide: Uroporphyrinogen decarboxylase (361 aa).

Residues 27 to 31 (RQAGR), Asp77, Tyr154, Thr209, and His327 each bind substrate.

Belongs to the uroporphyrinogen decarboxylase family. As to quaternary structure, homodimer.

It localises to the cytoplasm. The enzyme catalyses uroporphyrinogen III + 4 H(+) = coproporphyrinogen III + 4 CO2. The protein operates within porphyrin-containing compound metabolism; protoporphyrin-IX biosynthesis; coproporphyrinogen-III from 5-aminolevulinate: step 4/4. In terms of biological role, catalyzes the decarboxylation of four acetate groups of uroporphyrinogen-III to yield coproporphyrinogen-III. This is Uroporphyrinogen decarboxylase from Coxiella burnetii (strain RSA 331 / Henzerling II).